Reading from the N-terminus, the 81-residue chain is Sulfur carrier protein TusA (81 aa).

C19 (cysteine persulfide intermediate) is an active-site residue.

This sequence belongs to the sulfur carrier protein TusA family.

Its subcellular location is the cytoplasm. Sulfur carrier protein which probably makes part of a sulfur-relay system. The polypeptide is Sulfur carrier protein TusA (Vibrio vulnificus (strain CMCP6)).